The chain runs to 552 residues: Methyl-coenzyme M reductase II subunit alpha (552 aa).

Gln150 provides a ligand contact to coenzyme F430. Residues Arg228, 259-260 (KH), and Arg273 each bind coenzyme B. Residues Tyr335 and Tyr446 each coordinate coenzyme M.

It belongs to the methyl-coenzyme M reductase alpha subunit family. As to quaternary structure, MCR is a hexamer of two alpha, two beta, and two gamma chains, forming a dimer of heterotrimers. Coenzyme F430 is required as a cofactor.

It carries out the reaction coenzyme B + methyl-coenzyme M = methane + coenzyme M-coenzyme B heterodisulfide. Its pathway is one-carbon metabolism; methyl-coenzyme M reduction; methane from methyl-coenzyme M: step 1/1. Component of the methyl-coenzyme M reductase (MCR) I that catalyzes the reductive cleavage of methyl-coenzyme M (CoM-S-CH3 or 2-(methylthio)ethanesulfonate) using coenzyme B (CoB or 7-mercaptoheptanoylthreonine phosphate) as reductant which results in the production of methane and the mixed heterodisulfide of CoB and CoM (CoM-S-S-CoB). This is the final step in methanogenesis. The polypeptide is Methyl-coenzyme M reductase II subunit alpha (mrtA) (Methanocaldococcus jannaschii (strain ATCC 43067 / DSM 2661 / JAL-1 / JCM 10045 / NBRC 100440) (Methanococcus jannaschii)).